A 509-amino-acid polypeptide reads, in one-letter code: DNA primase large subunit (509 aa).

Positions 253–270 (LSHSYTGQDYSTQGNVGK) are interdomain linker. Residues 266–509 (GNVGKISLDQ…GLEDYFSEDS (244 aa)) are interacts with PRIM1. [4Fe-4S] cluster is bound by residues Cys287, Cys367, Cys384, and Cys424. An RNA:DNA duplex-binding region spans residues 300–442 (HLRHGGRMQY…NVDDCGFSLN (143 aa)). The segment at 461–486 (IKKEPIQPETPQPKPSVQKTKDASSA) is disordered. At Thr470 the chain carries Phosphothreonine.

It belongs to the eukaryotic-type primase large subunit family. Heterodimer of a catalytic subunit PRIM1 and a regulatory subunit PRIM2, also known as the DNA primase complex. Interacts via (C-terminus) with PRIM1. Component of the alpha DNA polymerase complex (also known as the alpha DNA polymerase-primase complex) consisting of four subunits: the catalytic subunit POLA1, the regulatory subunit POLA2, and the primase complex subunits PRIM1 and PRIM2 respectively. Within the complex, POLA1 directly interacts with PRIM2. Requires [4Fe-4S] cluster as cofactor.

Its function is as follows. Regulatory subunit of the DNA primase complex and component of the DNA polymerase alpha complex (also known as the alpha DNA polymerase-primase complex) which play an essential role in the initiation of DNA synthesis. During the S phase of the cell cycle, the DNA polymerase alpha complex (composed of a catalytic subunit POLA1, an accessory subunit POLA2 and two primase subunits, the catalytic subunit PRIM1 and the regulatory subunit PRIM2) is recruited to DNA at the replicative forks via direct interactions with MCM10 and WDHD1. The primase subunit of the polymerase alpha complex initiates DNA synthesis by oligomerising short RNA primers on both leading and lagging strands. These primers are initially extended by the polymerase alpha catalytic subunit and subsequently transferred to polymerase delta and polymerase epsilon for processive synthesis on the lagging and leading strand, respectively. In the primase complex, both subunits are necessary for the initial di-nucleotide formation, but the extension of the primer depends only on the catalytic subunit. Binds RNA:DNA duplex and coordinates the catalytic activities of PRIM1 and POLA2 during primase-to-polymerase switch. In Homo sapiens (Human), this protein is DNA primase large subunit (PRIM2).